A 547-amino-acid polypeptide reads, in one-letter code: Sesquiterpene synthase TPS3 (547 aa).

5 residues coordinate (2E,6E)-farnesyl diphosphate: R265, D302, D306, R443, and D446. Mg(2+) is bound by residues D302 and D306. Residues 302-306 (DDIYD) carry the DDXXD motif motif. Residues D446, T450, and E454 each contribute to the Mg(2+) site.

It belongs to the terpene synthase family. Tpsb subfamily. In terms of assembly, monomer. It depends on Mg(2+) as a cofactor.

It localises to the cytoplasm. It carries out the reaction (2E,6E)-farnesyl diphosphate = (1S,5S,6R)-alpha-bergamotene + diphosphate. It functions in the pathway secondary metabolite biosynthesis; terpenoid biosynthesis. Its function is as follows. Sesquiterpene synthase involved in the biosynthesis of volatile organic compounds. Mediates the conversion of (2E,6E)-farnesyl diphosphate (FPP) into alpha-bergamotene. Does not use (2E)-geranyl diphosphate (GPP) as substrate. The chain is Sesquiterpene synthase TPS3 from Cananga odorata (Ylang-ylang tree).